We begin with the raw amino-acid sequence, 356 residues long: Holliday junction branch migration complex subunit RuvB (356 aa).

Residues 1–14 are compositionally biased toward polar residues; it reads MAIVSSITNHSSLP. The interval 1–20 is disordered; sequence MAIVSSITNHSSLPNDKGEE. The segment at 13–201 is large ATPase domain (RuvB-L); that stretch reads LPNDKGEERL…FGITQRLDFY (189 aa). 9 residues coordinate ATP: L40, R41, G82, K85, T86, T87, R191, Y201, and R238. T86 provides a ligand contact to Mg(2+). The segment at 202–273 is small ATPAse domain (RuvB-S); sequence NYLDLENIIK…VVNDALDLHR (72 aa). The segment at 276–356 is head domain (RuvB-H); it reads QRGLDATDRS…LLTSPNNIDK (81 aa). The DNA site is built by R331 and R336.

This sequence belongs to the RuvB family. As to quaternary structure, homohexamer. Forms an RuvA(8)-RuvB(12)-Holliday junction (HJ) complex. HJ DNA is sandwiched between 2 RuvA tetramers; dsDNA enters through RuvA and exits via RuvB. An RuvB hexamer assembles on each DNA strand where it exits the tetramer. Each RuvB hexamer is contacted by two RuvA subunits (via domain III) on 2 adjacent RuvB subunits; this complex drives branch migration. In the full resolvosome a probable DNA-RuvA(4)-RuvB(12)-RuvC(2) complex forms which resolves the HJ.

It localises to the cytoplasm. It catalyses the reaction ATP + H2O = ADP + phosphate + H(+). Its function is as follows. The RuvA-RuvB-RuvC complex processes Holliday junction (HJ) DNA during genetic recombination and DNA repair, while the RuvA-RuvB complex plays an important role in the rescue of blocked DNA replication forks via replication fork reversal (RFR). RuvA specifically binds to HJ cruciform DNA, conferring on it an open structure. The RuvB hexamer acts as an ATP-dependent pump, pulling dsDNA into and through the RuvAB complex. RuvB forms 2 homohexamers on either side of HJ DNA bound by 1 or 2 RuvA tetramers; 4 subunits per hexamer contact DNA at a time. Coordinated motions by a converter formed by DNA-disengaged RuvB subunits stimulates ATP hydrolysis and nucleotide exchange. Immobilization of the converter enables RuvB to convert the ATP-contained energy into a lever motion, pulling 2 nucleotides of DNA out of the RuvA tetramer per ATP hydrolyzed, thus driving DNA branch migration. The RuvB motors rotate together with the DNA substrate, which together with the progressing nucleotide cycle form the mechanistic basis for DNA recombination by continuous HJ branch migration. Branch migration allows RuvC to scan DNA until it finds its consensus sequence, where it cleaves and resolves cruciform DNA. This Prochlorococcus marinus (strain NATL2A) protein is Holliday junction branch migration complex subunit RuvB.